The primary structure comprises 353 residues: MISENLGENQTEKIPLKGRTLKELSEIMITLGEKPFRAKQIYHGLYVNRYETWDQFTTFSKIFKEKLEELCSLTHLQVVKQLKSVDGTQKFTFTSESGNGKEFEAVWIPSGDGGRKTICISSQIGCTLNCKFCATAKLEFQGNLKAHEIVDQILQVEKIVGDKATNVVFMGMGEPLHNYFNVIRAASIFHDPDALNLGAKRITISTSGVVNGIRRFIENKEPYNFAISLNHPDPKGRLQIMDIEEKFSLPELLQAAKDFTRELKRRITFEYVMIPGVNMGFENANKLVKIAKSLDCKINVIPLNTEFFGWRRPTREEIAEFIALLEPAGVPILNRRSPGKDIFGACGMLASKS.

Glutamate 104 acts as the Proton acceptor in catalysis. Residues 112-341 enclose the Radical SAM core domain; the sequence is DGGRKTICIS…ILNRRSPGKD (230 aa). The cysteines at positions 119 and 346 are disulfide-linked. Positions 126, 130, and 133 each coordinate [4Fe-4S] cluster. S-adenosyl-L-methionine-binding positions include 173–174, serine 205, 228–230, and asparagine 304; these read GE and SLN. The S-methylcysteine intermediate role is filled by cysteine 346.

It belongs to the radical SAM superfamily. RlmN family. [4Fe-4S] cluster is required as a cofactor.

It localises to the cytoplasm. The catalysed reaction is adenosine(2503) in 23S rRNA + 2 reduced [2Fe-2S]-[ferredoxin] + 2 S-adenosyl-L-methionine = 2-methyladenosine(2503) in 23S rRNA + 5'-deoxyadenosine + L-methionine + 2 oxidized [2Fe-2S]-[ferredoxin] + S-adenosyl-L-homocysteine. It carries out the reaction adenosine(37) in tRNA + 2 reduced [2Fe-2S]-[ferredoxin] + 2 S-adenosyl-L-methionine = 2-methyladenosine(37) in tRNA + 5'-deoxyadenosine + L-methionine + 2 oxidized [2Fe-2S]-[ferredoxin] + S-adenosyl-L-homocysteine. Its function is as follows. Specifically methylates position 2 of adenine 2503 in 23S rRNA and position 2 of adenine 37 in tRNAs. The polypeptide is Probable dual-specificity RNA methyltransferase RlmN (Leptospira interrogans serogroup Icterohaemorrhagiae serovar copenhageni (strain Fiocruz L1-130)).